A 418-amino-acid polypeptide reads, in one-letter code: Glutamyl-tRNA reductase (418 aa).

Substrate-binding positions include 49–52 (TCNR), S109, 114–116 (EPQ), and Q120. Residue C50 is the Nucleophile of the active site. An NADP(+)-binding site is contributed by 189 to 194 (GAGETI).

This sequence belongs to the glutamyl-tRNA reductase family. In terms of assembly, homodimer.

The enzyme catalyses (S)-4-amino-5-oxopentanoate + tRNA(Glu) + NADP(+) = L-glutamyl-tRNA(Glu) + NADPH + H(+). It functions in the pathway porphyrin-containing compound metabolism; protoporphyrin-IX biosynthesis; 5-aminolevulinate from L-glutamyl-tRNA(Glu): step 1/2. In terms of biological role, catalyzes the NADPH-dependent reduction of glutamyl-tRNA(Glu) to glutamate 1-semialdehyde (GSA). In Salmonella dublin (strain CT_02021853), this protein is Glutamyl-tRNA reductase.